A 134-amino-acid chain; its full sequence is Protein PsiE homolog (134 aa).

Helical transmembrane passes span 14–34 (LQWI…IFLI), 56–76 (VESI…IKYF), 82–102 (FPLR…IIVS), and 106–126 (PMET…LYIS).

The protein belongs to the PsiE family.

It is found in the cell membrane. The protein is Protein PsiE homolog of Bacillus anthracis.